The sequence spans 447 residues: Rab GDP dissociation inhibitor alpha (447 aa).

At serine 427 the chain carries Phosphoserine.

The protein belongs to the Rab GDI family. As to quaternary structure, interacts with RHOH. Interacts with the non-phosphorylated forms of RAB1A, RAB3A, RAB5A, RAB5B, RAB5C, RAB8A, RAB8B, RAB10, RAB12, RAB35, and RAB43. As to expression, high expression in brain, lower in other tissues.

The protein localises to the cytoplasm. The protein resides in the golgi apparatus. It localises to the trans-Golgi network. Functionally, regulates the GDP/GTP exchange reaction of most Rab proteins by inhibiting the dissociation of GDP from them, and the subsequent binding of GTP to them. Promotes the dissociation of GDP-bound Rab proteins from the membrane and inhibits their activation. Promotes the dissociation of RAB1A, RAB3A, RAB5A and RAB10 from membranes. This chain is Rab GDP dissociation inhibitor alpha (Gdi1), found in Rattus norvegicus (Rat).